The primary structure comprises 320 residues: Lipoyl synthase (320 aa).

Positions 67, 72, 78, 93, 97, 100, and 307 each coordinate [4Fe-4S] cluster. In terms of domain architecture, Radical SAM core spans 79 to 296; sequence FNHGTATFMI…REKANEMGFE (218 aa).

It belongs to the radical SAM superfamily. Lipoyl synthase family. The cofactor is [4Fe-4S] cluster.

The protein localises to the cytoplasm. It catalyses the reaction [[Fe-S] cluster scaffold protein carrying a second [4Fe-4S](2+) cluster] + N(6)-octanoyl-L-lysyl-[protein] + 2 oxidized [2Fe-2S]-[ferredoxin] + 2 S-adenosyl-L-methionine + 4 H(+) = [[Fe-S] cluster scaffold protein] + N(6)-[(R)-dihydrolipoyl]-L-lysyl-[protein] + 4 Fe(3+) + 2 hydrogen sulfide + 2 5'-deoxyadenosine + 2 L-methionine + 2 reduced [2Fe-2S]-[ferredoxin]. It functions in the pathway protein modification; protein lipoylation via endogenous pathway; protein N(6)-(lipoyl)lysine from octanoyl-[acyl-carrier-protein]: step 2/2. Catalyzes the radical-mediated insertion of two sulfur atoms into the C-6 and C-8 positions of the octanoyl moiety bound to the lipoyl domains of lipoate-dependent enzymes, thereby converting the octanoylated domains into lipoylated derivatives. The polypeptide is Lipoyl synthase (Glaesserella parasuis serovar 5 (strain SH0165) (Haemophilus parasuis)).